A 443-amino-acid polypeptide reads, in one-letter code: Methyl-coenzyme M reductase I subunit beta (443 aa).

Coenzyme M is bound at residue Tyr-367. A coenzyme B-binding site is contributed by Gly-369.

Belongs to the methyl-coenzyme M reductase beta subunit family. In terms of assembly, MCR is a hexamer of two alpha, two beta, and two gamma chains, forming a dimer of heterotrimers. It depends on coenzyme F430 as a cofactor.

It is found in the cytoplasm. The enzyme catalyses coenzyme B + methyl-coenzyme M = methane + coenzyme M-coenzyme B heterodisulfide. It participates in one-carbon metabolism; methyl-coenzyme M reduction; methane from methyl-coenzyme M: step 1/1. Methyl-coenzyme M reductase activity is inhibited by 3-nitrooxypropanol (3-NOP) in vitro and in vivo, by oxidation of its active site Ni(I), which stops both growth and methanogenesis. Is also inhibited by the reaction product CoM-S-S-CoB. Functionally, component of the methyl-coenzyme M reductase (MCR) I that catalyzes the reductive cleavage of methyl-coenzyme M (CoM-S-CH3 or 2-(methylthio)ethanesulfonate) using coenzyme B (CoB or 7-mercaptoheptanoylthreonine phosphate) as reductant which results in the production of methane and the mixed heterodisulfide of CoB and CoM (CoM-S-S-CoB). This is the final step in methanogenesis. Neither N-6-mercaptohexanoylthreonine phosphate (H-S-HxoTP) nor N-8-mercaptooctanoylthreonine phosphate (H-SOcoTP) nor any other thiol compound such as CoA or CoM can substitute for CoB as the electron donor. The polypeptide is Methyl-coenzyme M reductase I subunit beta (mcrB) (Methanothermobacter marburgensis (strain ATCC BAA-927 / DSM 2133 / JCM 14651 / NBRC 100331 / OCM 82 / Marburg) (Methanobacterium thermoautotrophicum)).